The primary structure comprises 499 residues: Ribose import ATP-binding protein RbsA (499 aa).

ABC transporter domains lie at 3 to 240 (VEMS…VGRE) and 250 to 494 (LEPG…TGGD). 35 to 42 (GENGAGKS) provides a ligand contact to ATP.

The protein belongs to the ABC transporter superfamily. Ribose importer (TC 3.A.1.2.1) family. The complex is composed of an ATP-binding protein (RbsA), two transmembrane proteins (RbsC) and a solute-binding protein (RbsB).

It is found in the cell membrane. The catalysed reaction is D-ribose(out) + ATP + H2O = D-ribose(in) + ADP + phosphate + H(+). Functionally, part of the ABC transporter complex RbsABC involved in ribose import. Responsible for energy coupling to the transport system. The polypeptide is Ribose import ATP-binding protein RbsA (Shouchella clausii (strain KSM-K16) (Alkalihalobacillus clausii)).